The primary structure comprises 392 residues: uncharacterized protein (392 aa).

Belongs to the hcp1 family.

This is an uncharacterized protein from Escherichia coli (strain K12).